The primary structure comprises 44 residues: Photosystem I reaction center subunit IX (44 aa).

A helical membrane pass occupies residues 7 to 27 (YLSTAPVLTTLWFGSLAGLLI).

The protein belongs to the PsaJ family.

It localises to the plastid. Its subcellular location is the chloroplast thylakoid membrane. May help in the organization of the PsaE and PsaF subunits. This is Photosystem I reaction center subunit IX from Phalaenopsis aphrodite subsp. formosana (Moth orchid).